The chain runs to 1883 residues: Transmembrane protein 131 (1883 aa).

The N-terminal stretch at 1 to 22 is a signal peptide; sequence MGKRAGGGATGATTAAVSTSAG. Over 23–1117 the chain is Lumenal; the sequence is AGLEPAAARS…AEALPRPNWE (1095 aa). The tract at residues 109 to 283 is papD-L domain; that stretch reads RFEPPMLDFH…ETKGVMRASF (175 aa). The N-linked (GlcNAc...) asparagine glycan is linked to asparagine 300. The residue at position 803 (serine 803) is a Phosphoserine. The chain crosses the membrane as a helical span at residues 1118 to 1138; the sequence is LALYIIISGIMSALFLLVIGT. The Cytoplasmic portion of the chain corresponds to 1139–1883; sequence AYLEAQGIWE…WSNSHFPHEN (745 aa). 5 disordered regions span residues 1198-1580, 1593-1656, 1670-1712, 1766-1789, and 1832-1858; these read GAGG…DSLY, LKQR…KNGN, PGGN…PVSN, WESP…HTAT, and MGTE…TYNP. The span at 1237 to 1261 shows a compositional bias: low complexity; the sequence is AKNSSSTSSRTSAQAASSQSANKTS. Positions 1302-1316 are enriched in pro residues; it reads PQPPLPPPVPQPQEP. Residues serine 1322 and serine 1342 each carry the phosphoserine modification. Basic and acidic residues-rich tracts occupy residues 1330-1343 and 1353-1364; these read SHPE…HSSE and AMDKDFDHHDSP. Serine 1375 carries the phosphoserine modification. A compositionally biased stretch (basic residues) spans 1380–1394; that stretch reads SKGKGKPLQRKVKPP. The span at 1395-1417 shows a compositional bias: basic and acidic residues; the sequence is KKQEEKEKKGKGKPQEDELKDSL. Residues 1423–1434 show a composition bias toward low complexity; it reads SSTTTETSNPDT. Positions 1436–1458 are enriched in basic and acidic residues; it reads PLLKEDTEKQKGKQAMPEKHESE. Polar residues-rich tracts occupy residues 1510-1526 and 1542-1553; these read AMTS…TKGT and PNSQELGNTSSS. Positions 1602 to 1611 are enriched in pro residues; it reads PASPSPPAAP. A compositionally biased stretch (low complexity) spans 1619-1630; that stretch reads SYSSIVNSSSSS. Residues 1678–1690 are compositionally biased toward polar residues; that stretch reads VSSNKTGFSSSLG. Composition is skewed to low complexity over residues 1773 to 1784 and 1837 to 1849; these read PSPSWPASSGSP and SPAP…SSPA. Serine 1863 and serine 1871 each carry phosphoserine.

Belongs to the TMEM131 family. Interacts (via PapD-L domain) with COL1A2 (via C-terminus); the interaction is direct, may occur with other collagen proteins, and is involved in assembly and TRAPPIII ER-to-Golgi transport complex-dependent secretion of collagen. Interacts (via C-terminus) with TRAPPC8 (via C-terminus); the interaction is direct.

Its subcellular location is the membrane. In terms of biological role, collagen binding transmembrane protein involved in collagen secretion by recruiting the ER-to-Golgi transport complex TRAPPIII. May play a role in the immune response to viral infection. In Homo sapiens (Human), this protein is Transmembrane protein 131.